The sequence spans 354 residues: Probable glucan endo-1,3-beta-glucosidase BG5 (354 aa).

The first 30 residues, 1-30 (MLYLPKKLFLFFFSCIVVIVNYNNSDFVNA), serve as a signal peptide directing secretion. Catalysis depends on Glu137, which acts as the Proton donor. Glu276 functions as the Nucleophile in the catalytic mechanism. A glycan (N-linked (GlcNAc...) asparagine) is linked at Asn286.

Belongs to the glycosyl hydrolase 17 family.

Its subcellular location is the secreted. It carries out the reaction Hydrolysis of (1-&gt;3)-beta-D-glucosidic linkages in (1-&gt;3)-beta-D-glucans.. May play a role in plant defense against pathogens. The chain is Probable glucan endo-1,3-beta-glucosidase BG5 from Arabidopsis thaliana (Mouse-ear cress).